Here is a 534-residue protein sequence, read N- to C-terminus: MFGTESSLSMFLNTLTPKFYVALTGTSSLISGLILIFEWWYFRKYGTSFIEQVSVSHLRPLLGGVDNNSSNNSNSSNGDSDSNRQSVSECKVWRNPLNLFRGAEYNRYTWVTGREPLTYYDMNLSAQDHQTFFTCDSDHLRPADAIMQKAWRERNPQARISAAHEALEINEIRSRVEVPLIASSTIWEIKLLPKCATAYILLAEEEATTIAEAEKLFKQALKAGDGCYRRSQQLQHHGSQYEAQHRRDTNVLVYIKRRLAMCARRLGRTREAVKMMRDLMKEFPLLSMFNIHENLLEALLELQAYADVQAVLAKYDDISLPKSATICYTAALLKARAVSDKFSPEAASRRGLSTAEMNAVEAIHRAVEFNPHVPKYLLEMKSLILPPEHILKRGDSEAIAYAFFHLAHWKRVEGALNLLHCTWEGTFRMIPYPLEKGHLFYPYPICTETADRELLPSFHEVSVYPKKELPFFILFTAGLCSFTAMLALLTHQFPELMGVFAKAFLSTLFAPLNFVMEKVESILPSSLWHQLTRI.

The chain crosses the membrane as a helical span at residues 19–39 (FYVALTGTSSLISGLILIFEW). The span at 66 to 80 (DNNSSNNSNSSNGDS) shows a compositional bias: low complexity. Positions 66–85 (DNNSSNNSNSSNGDSDSNRQ) are disordered. A Phosphoserine modification is found at serine 343. Transmembrane regions (helical) follow at residues 469-489 (LPFF…LALL) and 496-516 (LMGV…NFVM).

Belongs to the ST7 family.

Its subcellular location is the membrane. The polypeptide is Suppressor of tumorigenicity 7 protein (ST7) (Macaca fascicularis (Crab-eating macaque)).